The following is a 206-amino-acid chain: HTH-type transcriptional regulator BetI (206 aa).

The 61-residue stretch at 8-68 folds into the HTH tetR-type domain; the sequence is PLRRKALVDA…ETIRSLLRDL (61 aa). A DNA-binding region (H-T-H motif) is located at residues 31-50; that stretch reads TMSDIAREAGVSAALAHHYF.

It functions in the pathway amine and polyamine biosynthesis; betaine biosynthesis via choline pathway [regulation]. Its function is as follows. Repressor involved in the biosynthesis of the osmoprotectant glycine betaine. It represses transcription of the choline transporter BetT and the genes of BetAB involved in the synthesis of glycine betaine. This chain is HTH-type transcriptional regulator BetI, found in Agrobacterium fabrum (strain C58 / ATCC 33970) (Agrobacterium tumefaciens (strain C58)).